The primary structure comprises 124 residues: uncharacterized protein (124 aa).

Positions 1–22 (MGTSSVLLMIASSLILLEVVMT) are cleaved as a signal peptide.

This is an uncharacterized protein from Caenorhabditis elegans.